The sequence spans 536 residues: Probable pectinesterase/pectinesterase inhibitor 59 (536 aa).

Positions 1–30 are cleaved as a signal peptide; sequence MNMMMQKLSILFLHLILLVLLCVHPLTTVA. The pectinesterase inhibitor 59 stretch occupies residues 31 to 183; it reads DRNSTDWCDK…SHLISNCLAV (153 aa). N-linked (GlcNAc...) asparagine glycans are attached at residues Asn33, Asn91, Asn116, Asn159, and Asn195. The segment at 221–522 is pectinesterase 59; the sequence is NLVVAKDGSG…FTVGKFIAGT (302 aa). Substrate-binding residues include Thr298 and Gln328. The Proton donor; for pectinesterase activity role is filled by Asp351. Cys365 and Cys385 are oxidised to a cystine. Catalysis depends on Asp372, which acts as the Nucleophile; for pectinesterase activity. The substrate site is built by Arg440 and Trp442.

This sequence in the N-terminal section; belongs to the PMEI family. It in the C-terminal section; belongs to the pectinesterase family. In terms of tissue distribution, expressed in siliques.

It localises to the secreted. It is found in the cell wall. It carries out the reaction [(1-&gt;4)-alpha-D-galacturonosyl methyl ester](n) + n H2O = [(1-&gt;4)-alpha-D-galacturonosyl](n) + n methanol + n H(+). It functions in the pathway glycan metabolism; pectin degradation; 2-dehydro-3-deoxy-D-gluconate from pectin: step 1/5. Acts in the modification of cell walls via demethylesterification of cell wall pectin. This Arabidopsis thaliana (Mouse-ear cress) protein is Probable pectinesterase/pectinesterase inhibitor 59 (PME59).